We begin with the raw amino-acid sequence, 263 residues long: Post-GPI attachment to proteins factor 2 (263 aa).

The next 6 helical transmembrane spans lie at 16-36 (FVFC…LLSL), 69-89 (YIWR…AVAF), 109-129 (FLCN…LALT), 143-163 (CFGG…WLFS), 180-200 (YKIL…YLYW), and 208-228 (PGIY…NIFF).

This sequence belongs to the PGAP2 family.

The protein localises to the golgi apparatus membrane. It is found in the endoplasmic reticulum membrane. In terms of biological role, involved in the lipid remodeling steps of GPI-anchor maturation. Required for stable expression of GPI-anchored proteins at the cell surface. The chain is Post-GPI attachment to proteins factor 2 from Caenorhabditis briggsae.